We begin with the raw amino-acid sequence, 167 residues long: Stress-related protein (167 aa).

This sequence belongs to the REF/SRPP family.

Plays a role in plant defense. In Phaseolus vulgaris (Kidney bean), this protein is Stress-related protein (SRP).